Consider the following 140-residue polypeptide: Small ribosomal subunit protein uS12 (140 aa).

Positions 1–20 (MPTINQLVRKGRQSKVVKSD) are disordered. Asp-102 carries the 3-methylthioaspartic acid modification. Residues 121–140 (DGRMQGRSKYGTKRPKAAKK) are disordered. A compositionally biased stretch (basic residues) spans 130 to 140 (YGTKRPKAAKK).

Belongs to the universal ribosomal protein uS12 family. As to quaternary structure, part of the 30S ribosomal subunit. Contacts proteins S8 and S17. May interact with IF1 in the 30S initiation complex.

Its function is as follows. With S4 and S5 plays an important role in translational accuracy. In terms of biological role, interacts with and stabilizes bases of the 16S rRNA that are involved in tRNA selection in the A site and with the mRNA backbone. Located at the interface of the 30S and 50S subunits, it traverses the body of the 30S subunit contacting proteins on the other side and probably holding the rRNA structure together. The combined cluster of proteins S8, S12 and S17 appears to hold together the shoulder and platform of the 30S subunit. This chain is Small ribosomal subunit protein uS12, found in Exiguobacterium sibiricum (strain DSM 17290 / CCUG 55495 / CIP 109462 / JCM 13490 / 255-15).